Consider the following 158-residue polypeptide: Transcription elongation factor GreA (158 aa).

The protein belongs to the GreA/GreB family.

In terms of biological role, necessary for efficient RNA polymerase transcription elongation past template-encoded arresting sites. The arresting sites in DNA have the property of trapping a certain fraction of elongating RNA polymerases that pass through, resulting in locked ternary complexes. Cleavage of the nascent transcript by cleavage factors such as GreA or GreB allows the resumption of elongation from the new 3'terminus. GreA releases sequences of 2 to 3 nucleotides. In Verminephrobacter eiseniae (strain EF01-2), this protein is Transcription elongation factor GreA.